Reading from the N-terminus, the 202-residue chain is MADVTLSRTGQVSRKTNETAVSVSVNIDGTGVSKIATGVGFFDHMLDQLARHSLIDMEIKTEGDLHVDDHHTVEDTGIAIGQAIAKALGDRRGITRYASLDLAMDETMTRAAVDVSGRPFLVWNVTFSSPKIGTFDTELVREFFQALAQHAGITLHVQNIYGANNHHVAETCFKSVARVLRTATEIDPRQAGRVPSTKGTLA.

The protein belongs to the imidazoleglycerol-phosphate dehydratase family.

Its subcellular location is the cytoplasm. The enzyme catalyses D-erythro-1-(imidazol-4-yl)glycerol 3-phosphate = 3-(imidazol-4-yl)-2-oxopropyl phosphate + H2O. The protein operates within amino-acid biosynthesis; L-histidine biosynthesis; L-histidine from 5-phospho-alpha-D-ribose 1-diphosphate: step 6/9. The polypeptide is Imidazoleglycerol-phosphate dehydratase (Sinorhizobium fredii (strain NBRC 101917 / NGR234)).